Reading from the N-terminus, the 493-residue chain is UDP-N-acetylmuramoyl-L-alanyl-D-glutamate--2,6-diaminopimelate ligase (493 aa).

Positions 30 and 32 each coordinate UDP-N-acetyl-alpha-D-muramoyl-L-alanyl-D-glutamate. 117–123 contributes to the ATP binding site; that stretch reads GTNGKTT. Residues N158, 159–160, S186, Q192, and R194 each bind UDP-N-acetyl-alpha-D-muramoyl-L-alanyl-D-glutamate; that span reads TT. An N6-carboxylysine modification is found at K226. Meso-2,6-diaminopimelate is bound by residues R388, 412-415, G463, and E467; that span reads DNPR. The short motif at 412 to 415 is the Meso-diaminopimelate recognition motif element; sequence DNPR.

This sequence belongs to the MurCDEF family. MurE subfamily. Mg(2+) serves as cofactor. Carboxylation is probably crucial for Mg(2+) binding and, consequently, for the gamma-phosphate positioning of ATP.

It localises to the cytoplasm. The catalysed reaction is UDP-N-acetyl-alpha-D-muramoyl-L-alanyl-D-glutamate + meso-2,6-diaminopimelate + ATP = UDP-N-acetyl-alpha-D-muramoyl-L-alanyl-gamma-D-glutamyl-meso-2,6-diaminopimelate + ADP + phosphate + H(+). Its pathway is cell wall biogenesis; peptidoglycan biosynthesis. Functionally, catalyzes the addition of meso-diaminopimelic acid to the nucleotide precursor UDP-N-acetylmuramoyl-L-alanyl-D-glutamate (UMAG) in the biosynthesis of bacterial cell-wall peptidoglycan. The polypeptide is UDP-N-acetylmuramoyl-L-alanyl-D-glutamate--2,6-diaminopimelate ligase (Vibrio parahaemolyticus serotype O3:K6 (strain RIMD 2210633)).